The following is a 119-amino-acid chain: DNA-directed RNA polymerase subunit omega (119 aa).

Belongs to the RNA polymerase subunit omega family. The RNAP catalytic core consists of 2 alpha, 1 beta, 1 beta' and 1 omega subunit. When a sigma factor is associated with the core the holoenzyme is formed, which can initiate transcription.

It catalyses the reaction RNA(n) + a ribonucleoside 5'-triphosphate = RNA(n+1) + diphosphate. Promotes RNA polymerase assembly. Latches the N- and C-terminal regions of the beta' subunit thereby facilitating its interaction with the beta and alpha subunits. This is DNA-directed RNA polymerase subunit omega from Caulobacter sp. (strain K31).